A 300-amino-acid polypeptide reads, in one-letter code: Tetrahydromethanopterin S-methyltransferase subunit E (300 aa).

Transmembrane regions (helical) follow at residues 62-82 (PVSYGLYVAAAGATAWALMGM), 86-106 (PILAIIVGSAVAALVHGAYSV), 135-155 (PIVGHGFIAVFCMLFAAYLAV), 158-178 (LGNPFPLPLVALIFGITVGAI), 226-246 (YFCSKLGGPLTGLAFGLIIFL), and 261-281 (LITKAAIAIVVGLIVVITTLL).

It belongs to the MtrE family. As to quaternary structure, the complex is composed of 8 subunits; MtrA, MtrB, MtrC, MtrD, MtrE, MtrF, MtrG and MtrH.

It is found in the cell membrane. It carries out the reaction 5-methyl-5,6,7,8-tetrahydromethanopterin + coenzyme M + 2 Na(+)(in) = 5,6,7,8-tetrahydromethanopterin + methyl-coenzyme M + 2 Na(+)(out). The protein operates within one-carbon metabolism; methanogenesis from CO(2); methyl-coenzyme M from 5,10-methylene-5,6,7,8-tetrahydromethanopterin: step 2/2. Its function is as follows. Part of a complex that catalyzes the formation of methyl-coenzyme M and tetrahydromethanopterin from coenzyme M and methyl-tetrahydromethanopterin. This is an energy-conserving, sodium-ion translocating step. The chain is Tetrahydromethanopterin S-methyltransferase subunit E from Methanococcus aeolicus (strain ATCC BAA-1280 / DSM 17508 / OCM 812 / Nankai-3).